The primary structure comprises 829 residues: Dipeptidyl peptidase family member 2 (829 aa).

Topologically, residues 1–27 (MENDNYDVEEQGCSVFNGKHGYFARSC) are cytoplasmic. The helical; Signal-anchor for type II membrane protein transmembrane segment at 28–48 (CVVFILIICVIFVFSVIFTFM) threads the bilayer. At 49–829 (QNPINLNSDN…DCFKSNLDLL (781 aa)) the chain is on the extracellular side. Residues N61, N66, N183, N209, N314, and N359 are each glycosylated (N-linked (GlcNAc...) asparagine). A disulfide bond links C514 and C533. The active-site Charge relay system is S691. An intrachain disulfide couples C711 to C821. N-linked (GlcNAc...) asparagine glycosylation occurs at N754. Catalysis depends on charge relay system residues D768 and H800.

It belongs to the peptidase S9B family. DPPIV subfamily.

Its subcellular location is the cell membrane. In terms of biological role, removes N-terminal dipeptides sequentially from polypeptides. Essential for control of distal tip cell migration. In Caenorhabditis elegans, this protein is Dipeptidyl peptidase family member 2 (dpf-2).